We begin with the raw amino-acid sequence, 128 residues long: Large ribosomal subunit protein bL21 (128 aa).

Positions 104–128 (GKSPSVGPRPKRVKAEPAPAADAAE) are disordered. Low complexity predominate over residues 119 to 128 (EPAPAADAAE).

It belongs to the bacterial ribosomal protein bL21 family. As to quaternary structure, part of the 50S ribosomal subunit. Contacts protein L20.

Its function is as follows. This protein binds to 23S rRNA in the presence of protein L20. The chain is Large ribosomal subunit protein bL21 from Rhodopseudomonas palustris (strain HaA2).